Consider the following 399-residue polypeptide: Flavohemoprotein (399 aa).

The region spanning 1 to 138 (MLDNKTIEII…IADAFIGIEK (138 aa)) is the Globin domain. Position 85 (His85) interacts with heme b. Residues Tyr95 and Glu137 each act as charge relay system in the active site. The segment at 149-399 (GGWKEYKPFV…GPQLSLAQSV (251 aa)) is reductase. In terms of domain architecture, FAD-binding FR-type spans 152-255 (KEYKPFVIAK…SAPAGDFVLD (104 aa)). FAD-binding positions include Tyr190 and 206–209 (RQYS). 268 to 273 (GVGITP) lines the NADP(+) pocket. Residue 388 to 391 (LFGP) participates in FAD binding.

The protein belongs to the globin family. Two-domain flavohemoproteins subfamily. It in the C-terminal section; belongs to the flavoprotein pyridine nucleotide cytochrome reductase family. Heme b serves as cofactor. Requires FAD as cofactor.

It catalyses the reaction 2 nitric oxide + NADPH + 2 O2 = 2 nitrate + NADP(+) + H(+). The enzyme catalyses 2 nitric oxide + NADH + 2 O2 = 2 nitrate + NAD(+) + H(+). In terms of biological role, is involved in NO detoxification in an aerobic process, termed nitric oxide dioxygenase (NOD) reaction that utilizes O(2) and NAD(P)H to convert NO to nitrate, which protects the bacterium from various noxious nitrogen compounds. Therefore, plays a central role in the inducible response to nitrosative stress. The chain is Flavohemoprotein (hmp) from Bacillus subtilis (strain 168).